A 380-amino-acid polypeptide reads, in one-letter code: Zinc metalloproteinase-like protein nas-21 (380 aa).

Residues 1–24 (MNYFITFFFMHIAVLNFYFRFSNG) form the signal peptide. Residues 46–234 (QALRMDNEPR…LMINEYYQCS (189 aa)) enclose the Peptidase M12A domain. An N-linked (GlcNAc...) asparagine glycan is attached at asparagine 87. 2 cysteine pairs are disulfide-bonded: cysteine 90–cysteine 233 and cysteine 110–cysteine 130. Glutamate 138 is an active-site residue. N-linked (GlcNAc...) asparagine glycosylation is found at asparagine 253, asparagine 269, asparagine 283, and asparagine 304.

It localises to the secreted. In terms of biological role, may lack metalloprotease activity. The sequence is that of Zinc metalloproteinase-like protein nas-21 (nas-21) from Caenorhabditis elegans.